The sequence spans 309 residues: uncharacterized protein (309 aa).

Pro residues-rich tracts occupy residues 1–17 (MTSRAPSPPTPPCPSPP) and 24–51 (SPVPTATPASPPLKPLSNPLPPPPPTPR). Disordered regions lie at residues 1–174 (MTSR…PPGV) and 216–240 (PPDLPSPPLSPPLSPPLSPISPLHA). Low complexity predominate over residues 67–83 (LRSSPSSALNASRGAPS). Residues 84–112 (TSPPPSSSPPSSPASTPPSRTPSPTPTAP) show a composition bias toward pro residues. 2 stretches are compositionally biased toward low complexity: residues 113-125 (ASPVASTAMTPAS) and 135-144 (APSSSAALSS). Pro residues predominate over residues 160 to 174 (PPPPLPPPLQPPPGV). The chain crosses the membrane as a helical span at residues 278-298 (LFLLFTLLSIHFSPFPIFILL).

The protein resides in the host membrane. This is an uncharacterized protein from Vitis vinifera (Grape).